We begin with the raw amino-acid sequence, 266 residues long: Syntaxin-71 (266 aa).

The Cytoplasmic segment spans residues 1–243 (MTVIDILTRV…TVNQLRSSRN (243 aa)). S12 is subject to Phosphoserine. A coiled-coil region spans residues 44–87 (ETQIETALEKAELVTKEKNRAAAVAMNAEIRRTKARLSEEVPKL). Residues 122–146 (DGTAGGPKSTSAWTPSSTTSRPDIK) form a disordered region. Over residues 130–141 (STSAWTPSSTTS) the composition is skewed to low complexity. The t-SNARE coiled-coil homology domain maps to 172–234 (EMRKIKQEQG…KNTNVRLKDT (63 aa)). Residues 244 to 264 (FCIDIVLLCIVLGIAAYLYNV) form a helical; Anchor for type IV membrane protein membrane-spanning segment. Residues 265 to 266 (LK) are Vesicular-facing.

The protein belongs to the syntaxin family. In terms of assembly, part of the t-SNARE complex. As to expression, expressed in root, leaf, stem, flower and silique.

The protein localises to the membrane. Functionally, vesicle trafficking protein that functions in the secretory pathway. The polypeptide is Syntaxin-71 (SYP71) (Arabidopsis thaliana (Mouse-ear cress)).